The primary structure comprises 301 residues: GTP cyclohydrolase FolE2 (301 aa).

The protein belongs to the GTP cyclohydrolase IV family.

The enzyme catalyses GTP + H2O = 7,8-dihydroneopterin 3'-triphosphate + formate + H(+). The protein operates within cofactor biosynthesis; 7,8-dihydroneopterin triphosphate biosynthesis; 7,8-dihydroneopterin triphosphate from GTP: step 1/1. In terms of biological role, converts GTP to 7,8-dihydroneopterin triphosphate. The sequence is that of GTP cyclohydrolase FolE2 from Pseudomonas putida (strain GB-1).